The sequence spans 139 residues: MRVLGLDVGDKTIGVAISDVSSTIAQGITTIRRKSFVEDVKAIEEIVKKYSVEKVVVGLPKNMNGSIGPQGEKVIKFGEKLREVLRIPVVFWDERLTTLQAERFLIEGVDMSRGKRKKVIDKLAATIILQSYLDSQKNS.

The protein belongs to the YqgF nuclease family.

It localises to the cytoplasm. Functionally, could be a nuclease involved in processing of the 5'-end of pre-16S rRNA. This Caldanaerobacter subterraneus subsp. tengcongensis (strain DSM 15242 / JCM 11007 / NBRC 100824 / MB4) (Thermoanaerobacter tengcongensis) protein is Putative pre-16S rRNA nuclease.